A 331-amino-acid chain; its full sequence is GTP 3',8-cyclase (331 aa).

A Radical SAM core domain is found at 1–231; sequence MNAVDYLRIS…DGQVQGNGPA (231 aa). Arginine 8 serves as a coordination point for GTP. [4Fe-4S] cluster contacts are provided by cysteine 15 and cysteine 19. Tyrosine 21 provides a ligand contact to S-adenosyl-L-methionine. Cysteine 22 contacts [4Fe-4S] cluster. Position 60 (arginine 60) interacts with GTP. Position 64 (glycine 64) interacts with S-adenosyl-L-methionine. Residue threonine 91 participates in GTP binding. Serine 115 serves as a coordination point for S-adenosyl-L-methionine. Lysine 157 lines the GTP pocket. Methionine 191 is a binding site for S-adenosyl-L-methionine. 2 residues coordinate [4Fe-4S] cluster: cysteine 254 and cysteine 257. Residue 259–261 participates in GTP binding; that stretch reads RMR. Cysteine 271 contacts [4Fe-4S] cluster.

This sequence belongs to the radical SAM superfamily. MoaA family. Monomer and homodimer. Requires [4Fe-4S] cluster as cofactor.

It catalyses the reaction GTP + AH2 + S-adenosyl-L-methionine = (8S)-3',8-cyclo-7,8-dihydroguanosine 5'-triphosphate + 5'-deoxyadenosine + L-methionine + A + H(+). Its pathway is cofactor biosynthesis; molybdopterin biosynthesis. In terms of biological role, catalyzes the cyclization of GTP to (8S)-3',8-cyclo-7,8-dihydroguanosine 5'-triphosphate. This is GTP 3',8-cyclase from Acaryochloris marina (strain MBIC 11017).